Consider the following 775-residue polypeptide: DENN domain-containing protein 1B (775 aa).

Positions 14–143 (DLVLKVKCHA…YNHPVPKANT (130 aa)) constitute a uDENN domain. One can recognise a cDENN domain in the interval 180 to 316 (GLPTIPESRN…VVSALKNKLK (137 aa)). Residues 318 to 395 (QSTATGDGVA…DGRLAKLNAG (78 aa)) form the dDENN domain. The FXDXF motif signature appears at 398–402 (FSDVF). Y520 carries the post-translational modification Phosphotyrosine. A phosphoserine mark is found at S535, S536, S549, and S552. Residues 566 to 575 (DLLGEILDTL) carry the Clathrin box motif. 2 disordered regions span residues 635 to 654 (DSAL…VSSS) and 671 to 706 (HLGA…KRET). Basic residues predominate over residues 639–651 (HGKHLPPSPRKRV). A phosphoserine mark is found at S652 and S653. Residues 695 to 706 (QTDKGKTEKRET) show a composition bias toward basic and acidic residues.

As to quaternary structure, interacts with RAB35. Interacts with clathrin heavy chain/CLTC. Interacts with components of the adapter protein complex 2 (AP-2) AP2A2 and AP2B1. Interacts with CD3E. Phosphorylated on serine and/or threonine, possibly regulating the guanine nucleotide exchange factor (GEF) activity. In terms of tissue distribution, highly expressed in dendritic and natural killer cells and at lower levels in other myeloid lineage cells and in pituitary. Significantly up-regulated in effector memory T-cells as compared with naive T-cells.

The protein resides in the cytoplasm. Its subcellular location is the cytosol. The protein localises to the cytoplasmic vesicle. It localises to the clathrin-coated vesicle. Its function is as follows. Guanine nucleotide exchange factor (GEF) for RAB35 that acts as a regulator of T-cell receptor (TCR) internalization in TH2 cells. Acts by promoting the exchange of GDP to GTP, converting inactive GDP-bound RAB35 into its active GTP-bound form. Plays a role in clathrin-mediated endocytosis. Controls cytokine production in TH2 lymphocytes by controlling the rate of TCR internalization and routing to endosomes: acts by mediating clathrin-mediated endocytosis of TCR via its interaction with the adapter protein complex 2 (AP-2) and GEF activity. Dysregulation leads to impaired TCR down-modulation and recycling, affecting cytokine production in TH2 cells. This chain is DENN domain-containing protein 1B, found in Homo sapiens (Human).